We begin with the raw amino-acid sequence, 892 residues long: Alanine--tRNA ligase (892 aa).

Positions 574, 578, 676, and 680 each coordinate Zn(2+).

The protein belongs to the class-II aminoacyl-tRNA synthetase family. It depends on Zn(2+) as a cofactor.

It is found in the cytoplasm. The enzyme catalyses tRNA(Ala) + L-alanine + ATP = L-alanyl-tRNA(Ala) + AMP + diphosphate. In terms of biological role, catalyzes the attachment of alanine to tRNA(Ala) in a two-step reaction: alanine is first activated by ATP to form Ala-AMP and then transferred to the acceptor end of tRNA(Ala). Also edits incorrectly charged Ser-tRNA(Ala) and Gly-tRNA(Ala) via its editing domain. The protein is Alanine--tRNA ligase of Prochlorococcus marinus (strain MIT 9313).